The primary structure comprises 479 residues: UDP-glucose flavonoid 3-O-glucosyltransferase 6 (479 aa).

The active-site Proton acceptor is the H17. H17 provides a ligand contact to an anthocyanidin. D121 functions as the Charge relay in the catalytic mechanism. Positions 143, 354, 356, 371, 374, 375, 376, and 379 each coordinate UDP-alpha-D-glucose. A394 is a binding site for an anthocyanidin. UDP-alpha-D-glucose is bound by residues E395 and Q396. The tract at residues 454 to 479 is disordered; it reads MSRKALEEDGSSYSSLGRFLDQIQTS.

Belongs to the UDP-glycosyltransferase family. Strongly expressed in achenes, with lower expression levels detected in receptacles.

It catalyses the reaction a flavonol + UDP-alpha-D-glucose = a flavonol 3-O-beta-D-glucoside + UDP + H(+). Its function is as follows. Broad spectrum multifunctional glucosyltransferase. Catalyzes the formation of flavonol 3-O-glucosides during fruit ripening. Accepted substrates include several flavonoids, hydroxycoumarins and beta-naphthols. Uses UDP-Glc as a sugar donor, but not UDP-Gal or UDP-GlcUA. May also be involved in detoxification of xenobiotics. The chain is UDP-glucose flavonoid 3-O-glucosyltransferase 6 from Fragaria ananassa (Strawberry).